A 640-amino-acid chain; its full sequence is Threonine--tRNA ligase (640 aa).

The TGS domain occupies 1-61 (MPVITLPDGS…SNDATLQIIT (61 aa)). Positions 242 to 533 (DHRKIGKQLD…LIEHYAGVFP (292 aa)) are catalytic. The Zn(2+) site is built by cysteine 333, histidine 384, and histidine 510.

Belongs to the class-II aminoacyl-tRNA synthetase family. In terms of assembly, homodimer. It depends on Zn(2+) as a cofactor.

The protein resides in the cytoplasm. It carries out the reaction tRNA(Thr) + L-threonine + ATP = L-threonyl-tRNA(Thr) + AMP + diphosphate + H(+). Its function is as follows. Catalyzes the attachment of threonine to tRNA(Thr) in a two-step reaction: L-threonine is first activated by ATP to form Thr-AMP and then transferred to the acceptor end of tRNA(Thr). Also edits incorrectly charged L-seryl-tRNA(Thr). This Pseudomonas putida (strain GB-1) protein is Threonine--tRNA ligase.